The primary structure comprises 519 residues: MARGKNVELSEYERKRQENIAKTQALLRNLEMEAAEAGLGPTGKSRAAASSKPRVKKPAPKKIKQEDIAPRRTSSRLKGIEADSEKAKRKAEDEYVAIKEADRAKRQRVSDAFNFSDIVVAGKDWNRSGNFLSIGPANPYERTFDFDDVKETTDKELRALREKMSGLQLWEDFEPNEIKITPERIYAMGMHPTTEKPLVFAGDKLGNLGICDASQKVAEVKQEDDEDADNEGPTITTLKPHTRTIHTFQFSPHDSNALYSASYDSSVRKLDLAKGVAVEVYGPSDPNEDQPLSGLEISKDDANTLYFSTLDGRFGIYDMRTPSDQAELFQLSEKKIGGFSLHPQQPHLVATASLDRTLKIWDLRKISGKGDSRLPALVGEHESRLSVSHAAWNSAGQVATASYDDTIKIHDFSKSAEWATGTALTDADMKPSVVVPHNNQTGRWVTILRAQWQQFPQDGVQRFCIGNMNRFVDIYTAKGQQLAQLGGDGITAVPAVAKFHPTLDWVAAGTASGKLCLWM.

Positions 35–92 (AEAGLGPTGKSRAAASSKPRVKKPAPKKIKQEDIAPRRTSSRLKGIEADSEKAKRKAE) are disordered. A compositionally biased stretch (basic residues) spans 53 to 62 (PRVKKPAPKK). The span at 78–92 (KGIEADSEKAKRKAE) shows a compositional bias: basic and acidic residues. 6 WD repeats span residues 240–280 (PHTR…AVEV), 287–327 (NEDQ…DQAE), 331–371 (LSEK…GKGD), 380–420 (EHES…EWAT), 442–485 (GRWV…LAQL), and 488–519 (DGIT…CLWM).

Belongs to the WD repeat DDB2/WDR76 family.

Its function is as follows. DNA-binding protein that binds to both single- and double-stranded DNA. Binds preferentially to UV-damaged DNA. May be involved in DNA-metabolic processes. The protein is DNA damage-binding protein CMR1 of Phaeosphaeria nodorum (strain SN15 / ATCC MYA-4574 / FGSC 10173) (Glume blotch fungus).